A 141-amino-acid chain; its full sequence is D-aminoacyl-tRNA deacylase (141 aa).

A Gly-cisPro motif, important for rejection of L-amino acids motif is present at residues 133 to 134 (GP).

It belongs to the DTD family. As to quaternary structure, homodimer.

Its subcellular location is the cytoplasm. It catalyses the reaction glycyl-tRNA(Ala) + H2O = tRNA(Ala) + glycine + H(+). The enzyme catalyses a D-aminoacyl-tRNA + H2O = a tRNA + a D-alpha-amino acid + H(+). Functionally, an aminoacyl-tRNA editing enzyme that deacylates mischarged D-aminoacyl-tRNAs. Also deacylates mischarged glycyl-tRNA(Ala), protecting cells against glycine mischarging by AlaRS. Acts via tRNA-based rather than protein-based catalysis; rejects L-amino acids rather than detecting D-amino acids in the active site. By recycling D-aminoacyl-tRNA to D-amino acids and free tRNA molecules, this enzyme counteracts the toxicity associated with the formation of D-aminoacyl-tRNA entities in vivo and helps enforce protein L-homochirality. The chain is D-aminoacyl-tRNA deacylase from Nautilia profundicola (strain ATCC BAA-1463 / DSM 18972 / AmH).